Consider the following 78-residue polypeptide: MSRVCQVTGKKPMVGNNRSHAKNATRRRFLPNLQNHRFWLEGEKRFVKLRISTKGMRIIDKKGIEVVVAELRARGEKV.

The interval 1-21 (MSRVCQVTGKKPMVGNNRSHA) is disordered.

Belongs to the bacterial ribosomal protein bL28 family.

The polypeptide is Large ribosomal subunit protein bL28 (Shewanella woodyi (strain ATCC 51908 / MS32)).